Here is a 334-residue protein sequence, read N- to C-terminus: Holliday junction branch migration complex subunit RuvB (334 aa).

A large ATPase domain (RuvB-L) region spans residues 4 to 184; sequence ADRLISAAVI…FGIVQRLEFY (181 aa). Residues Ile23, Arg24, Gly65, Lys68, Thr69, Thr70, 131-133, Arg174, Tyr184, and Arg221 each bind ATP; that span reads EDY. Residue Thr69 coordinates Mg(2+). A small ATPAse domain (RuvB-S) region spans residues 185–255; that stretch reads PVADLEHIVS…VAMKALDMLN (71 aa). Residues 258–334 form a head domain (RuvB-H) region; the sequence is AEGFDFMDRK…YKHFGITREE (77 aa). Positions 294, 313, and 318 each coordinate DNA.

This sequence belongs to the RuvB family. As to quaternary structure, homohexamer. Forms an RuvA(8)-RuvB(12)-Holliday junction (HJ) complex. HJ DNA is sandwiched between 2 RuvA tetramers; dsDNA enters through RuvA and exits via RuvB. An RuvB hexamer assembles on each DNA strand where it exits the tetramer. Each RuvB hexamer is contacted by two RuvA subunits (via domain III) on 2 adjacent RuvB subunits; this complex drives branch migration. In the full resolvosome a probable DNA-RuvA(4)-RuvB(12)-RuvC(2) complex forms which resolves the HJ.

Its subcellular location is the cytoplasm. It catalyses the reaction ATP + H2O = ADP + phosphate + H(+). Functionally, the RuvA-RuvB-RuvC complex processes Holliday junction (HJ) DNA during genetic recombination and DNA repair, while the RuvA-RuvB complex plays an important role in the rescue of blocked DNA replication forks via replication fork reversal (RFR). RuvA specifically binds to HJ cruciform DNA, conferring on it an open structure. The RuvB hexamer acts as an ATP-dependent pump, pulling dsDNA into and through the RuvAB complex. RuvB forms 2 homohexamers on either side of HJ DNA bound by 1 or 2 RuvA tetramers; 4 subunits per hexamer contact DNA at a time. Coordinated motions by a converter formed by DNA-disengaged RuvB subunits stimulates ATP hydrolysis and nucleotide exchange. Immobilization of the converter enables RuvB to convert the ATP-contained energy into a lever motion, pulling 2 nucleotides of DNA out of the RuvA tetramer per ATP hydrolyzed, thus driving DNA branch migration. The RuvB motors rotate together with the DNA substrate, which together with the progressing nucleotide cycle form the mechanistic basis for DNA recombination by continuous HJ branch migration. Branch migration allows RuvC to scan DNA until it finds its consensus sequence, where it cleaves and resolves cruciform DNA. This is Holliday junction branch migration complex subunit RuvB from Yersinia pestis bv. Antiqua (strain Angola).